The sequence spans 377 residues: DNA-directed RNA polymerase subunit alpha (377 aa).

Residues 1–259 (MSDSSHNLLY…KHFSVFEKMD (259 aa)) are alpha N-terminal domain (alpha-NTD). Positions 276-377 (KDDILHKLVL…KIRLSKNTKG (102 aa)) are alpha C-terminal domain (alpha-CTD).

It belongs to the RNA polymerase alpha chain family. Homodimer. The RNAP catalytic core consists of 2 alpha, 1 beta, 1 beta' and 1 omega subunit. When a sigma factor is associated with the core the holoenzyme is formed, which can initiate transcription.

The catalysed reaction is RNA(n) + a ribonucleoside 5'-triphosphate = RNA(n+1) + diphosphate. Functionally, DNA-dependent RNA polymerase catalyzes the transcription of DNA into RNA using the four ribonucleoside triphosphates as substrates. In Chlamydia trachomatis serovar A (strain ATCC VR-571B / DSM 19440 / HAR-13), this protein is DNA-directed RNA polymerase subunit alpha.